Here is a 335-residue protein sequence, read N- to C-terminus: Dihydroorotate dehydrogenase (quinone) (335 aa).

FMN contacts are provided by residues alanine 59–lysine 63 and threonine 83. Lysine 63 lines the substrate pocket. Asparagine 108–phenylalanine 112 contacts substrate. FMN contacts are provided by asparagine 136 and asparagine 169. Asparagine 169 is a substrate binding site. Serine 172 functions as the Nucleophile in the catalytic mechanism. Residue asparagine 174 coordinates substrate. 2 residues coordinate FMN: lysine 214 and threonine 242. Asparagine 243–threonine 244 is a binding site for substrate. Residues glycine 265, glycine 294, and tyrosine 315 to serine 316 contribute to the FMN site.

The protein belongs to the dihydroorotate dehydrogenase family. Type 2 subfamily. Monomer. Requires FMN as cofactor.

The protein localises to the cell membrane. The catalysed reaction is (S)-dihydroorotate + a quinone = orotate + a quinol. Its pathway is pyrimidine metabolism; UMP biosynthesis via de novo pathway; orotate from (S)-dihydroorotate (quinone route): step 1/1. Its function is as follows. Catalyzes the conversion of dihydroorotate to orotate with quinone as electron acceptor. This Neisseria gonorrhoeae (strain ATCC 700825 / FA 1090) protein is Dihydroorotate dehydrogenase (quinone).